A 229-amino-acid polypeptide reads, in one-letter code: Large ribosomal subunit protein uL1 (229 aa).

It belongs to the universal ribosomal protein uL1 family. As to quaternary structure, part of the 50S ribosomal subunit.

Its function is as follows. Binds directly to 23S rRNA. The L1 stalk is quite mobile in the ribosome, and is involved in E site tRNA release. In terms of biological role, protein L1 is also a translational repressor protein, it controls the translation of the L11 operon by binding to its mRNA. This is Large ribosomal subunit protein uL1 from Haemophilus influenzae (strain 86-028NP).